Consider the following 235-residue polypeptide: Transcriptional regulatory protein WalR (235 aa).

The Response regulatory domain maps to 4 to 117; that stretch reads KILVVDDEKP…ELLARVKANL (114 aa). Asp-53 is modified (4-aspartylphosphate). A DNA-binding region (ompR/PhoB-type) is located at residues 132 to 231; that stretch reads SNEIHIGSLV…RRGVGYYLRN (100 aa).

In terms of assembly, homodimer. Phosphorylated by WalK.

The protein localises to the cytoplasm. Its function is as follows. Member of the two-component regulatory system WalK/WalR involved in the regulation of the ftsAZ operon, the yocH, ykvT, cwlO, lytE, ydjM, yjeA, yoeB genes and the tagAB and tagDEF operons. Binds to the ftsAZ P1 promoter sequence in vitro. WalR has been shown to directly bind to the regulatory regions of yocH, ykvT, tagAB/tagDEF. Activates cwlO, lytE and ydjM and represses yoeB and yjeA. This Bacillus subtilis (strain 168) protein is Transcriptional regulatory protein WalR.